Here is a 76-residue protein sequence, read N- to C-terminus: Small ribosomal subunit protein bS18 (76 aa).

This sequence belongs to the bacterial ribosomal protein bS18 family. As to quaternary structure, part of the 30S ribosomal subunit. Forms a tight heterodimer with protein bS6.

Functionally, binds as a heterodimer with protein bS6 to the central domain of the 16S rRNA, where it helps stabilize the platform of the 30S subunit. This is Small ribosomal subunit protein bS18 from Carboxydothermus hydrogenoformans (strain ATCC BAA-161 / DSM 6008 / Z-2901).